We begin with the raw amino-acid sequence, 255 residues long: Thiazole synthase (255 aa).

The Schiff-base intermediate with DXP role is filled by K96. 1-deoxy-D-xylulose 5-phosphate is bound by residues G157, 183 to 184, and 205 to 206; these read AG and NT.

This sequence belongs to the ThiG family. As to quaternary structure, homotetramer. Forms heterodimers with either ThiH or ThiS.

It is found in the cytoplasm. It catalyses the reaction [ThiS sulfur-carrier protein]-C-terminal-Gly-aminoethanethioate + 2-iminoacetate + 1-deoxy-D-xylulose 5-phosphate = [ThiS sulfur-carrier protein]-C-terminal Gly-Gly + 2-[(2R,5Z)-2-carboxy-4-methylthiazol-5(2H)-ylidene]ethyl phosphate + 2 H2O + H(+). The protein operates within cofactor biosynthesis; thiamine diphosphate biosynthesis. Its function is as follows. Catalyzes the rearrangement of 1-deoxy-D-xylulose 5-phosphate (DXP) to produce the thiazole phosphate moiety of thiamine. Sulfur is provided by the thiocarboxylate moiety of the carrier protein ThiS. In vitro, sulfur can be provided by H(2)S. This chain is Thiazole synthase, found in Geobacillus thermodenitrificans (strain NG80-2).